The primary structure comprises 121 residues: Acidic phospholipase A2 PLA-1 (121 aa).

Disulfide bonds link Cys26-Cys115, Cys28-Cys44, Cys43-Cys95, Cys49-Cys121, Cys50-Cys88, Cys57-Cys81, and Cys75-Cys86. Residues Tyr27, Gly29, and Gly31 each contribute to the Ca(2+) site. His47 is an active-site residue. Asp48 lines the Ca(2+) pocket. The active site involves Asp89.

It belongs to the phospholipase A2 family. Group II subfamily. D49 sub-subfamily. It depends on Ca(2+) as a cofactor. As to expression, expressed by the venom gland.

It localises to the secreted. The enzyme catalyses a 1,2-diacyl-sn-glycero-3-phosphocholine + H2O = a 1-acyl-sn-glycero-3-phosphocholine + a fatty acid + H(+). Its function is as follows. PLA2 catalyzes the calcium-dependent hydrolysis of the 2-acyl groups in 3-sn-phosphoglycerides. This is Acidic phospholipase A2 PLA-1 from Eristicophis macmahoni (Leaf-nosed viper).